Reading from the N-terminus, the 176-residue chain is Putative ribosomal protein eS10-like (176 aa).

The disordered stretch occupies residues 104 to 176 (TLHRSRPETG…CGRGRGQPPQ (73 aa)). The span at 108 to 139 (SRPETGRPRPKGLEGKRPARLTRREADRDTYR) shows a compositional bias: basic and acidic residues.

Belongs to the eukaryotic ribosomal protein eS10 family.

This chain is Putative ribosomal protein eS10-like (RPS10P5), found in Homo sapiens (Human).